The following is an 825-amino-acid chain: Extracellular exo-alpha-L-arabinofuranosidase (825 aa).

Residues 1–29 (MSRIRWRYGTAATALLVAAGLVPTATAHA) form the signal peptide. E58 contacts alpha-L-arabinofuranose. A CBM-cenC domain is found at 70 to 215 (AELVQNRSFE…ALDMVSLFPR (146 aa)). Alpha-L-arabinofuranose is bound by residues C247 and 379-380 (NE). Catalysis depends on E380, which acts as the Proton donor/acceptor.

The protein belongs to the glycosyl hydrolase 51 family.

The protein localises to the secreted. The catalysed reaction is Hydrolysis of terminal non-reducing alpha-L-arabinofuranoside residues in alpha-L-arabinosides.. Functionally, involved in the degradation of arabinan and is a key enzyme in the complete degradation of the plant cell wall. Catalyzes the cleavage of terminal alpha-L-arabinofuranosyl residues of arabinan present in the arabinofuranosyl polysaccharides or oligosaccharides. It cannot act on other arabinose-containing polysaccharides and arabinoxylo-oligosaccharides. It leaves most of the polymer intact, including most of the main-chain residues and the arabinose side chains. It acts preferentially on the linear alpha-(1-&gt;2)-linked arabinofuranobiosides and alpha-(1-&gt;3)-linked arabinofuranobiosides, and is much less effective on alpha-(1-&gt;5)-linked arabinofuranobiosides. It also hydrolyzes the terminal alpha-(1-&gt;3)-linked arabinofuranotriosides in preference to the alpha-(1-&gt;5)-linked arabinofuranotriosides. In Streptomyces chartreusis, this protein is Extracellular exo-alpha-L-arabinofuranosidase.